Here is a 347-residue protein sequence, read N- to C-terminus: MRIEEDLKLGFKDVLIRPKRSTLKSRSDVELERQFTFKHSGQSWSGVPIIAANMDTVGTFSMASALASFDILTAVHKHYSVEEWQAFINNSSADVLKHVMVSTGTSDADFEKTKQILDLNPALNFVCIDVANGYSEHFVQFVAKAREAWPTKTICAGNVVTGEMCEELILSGADIVKVGIGPGSVCTTRVKTGVGYPQLSAVIECADAAHGLGGMIVSDGGCTTPGDVAKAFGGGADFVMLGGMLAGHEESGGRIIEENGEKFMLFYGMSSESAMKRHVGGVAEYRAAEGKTVKLPLRGPVENTARDILGGLRSACTYVGASRLKELTKRTTFIRVQEQENRIFNNL.

Ala108–Ala131 is a binding site for NADP(+). Residues Gly181 and Gly183 each contribute to the K(+) site. Catalysis depends on Cys186, which acts as the Thioimidate intermediate. An NADP(+)-binding site is contributed by Ile216 to Val239.

The protein belongs to the IMPDH/GMPR family. GuaC type 1 subfamily. In terms of assembly, homotetramer.

It catalyses the reaction IMP + NH4(+) + NADP(+) = GMP + NADPH + 2 H(+). In terms of biological role, catalyzes the irreversible NADPH-dependent deamination of GMP to IMP. It functions in the conversion of nucleobase, nucleoside and nucleotide derivatives of G to A nucleotides, and in maintaining the intracellular balance of A and G nucleotides. The chain is GMP reductase from Escherichia coli O139:H28 (strain E24377A / ETEC).